The primary structure comprises 117 residues: Eukaryotic translation initiation factor 4E-binding protein 1 (117 aa).

Composition is skewed to polar residues over residues 1–12 and 33–47; these read MSAGSSCSQTPS and YSTT…TTPG. The tract at residues 1–47 is disordered; the sequence is MSAGSSCSQTPSRAIPTRRVALGDGVQLPPGDYSTTPGGTLFSTTPG. Ser2 carries the post-translational modification N-acetylserine. Phosphothreonine is present on residues Thr36 and Thr40. Position 43 is a phosphoserine (Ser43). Position 45 is a phosphothreonine; by MTOR (Thr45). Phosphothreonine is present on Thr49. At Tyr53 the chain carries Phosphotyrosine. Residues 53-59 carry the YXXXXLphi motif motif; that stretch reads YDRKFLM. Lys56 is covalently cross-linked (Glycyl lysine isopeptide (Lys-Gly) (interchain with G-Cter in ubiquitin)). Residue Ser64 is modified to Phosphoserine; by DYRK2, MAPK1, MAPK3 and MTOR. The interval 64-117 is disordered; it reads SPVAKTPPKDLPTIPGVTSPTSDEPPMQASQSHLHSSPEDKRAGGEESQFEMDI. Thr69 bears the Phosphothreonine; by MTOR mark. Residue Thr76 is modified to Phosphothreonine. Residues 79–98 show a composition bias toward polar residues; it reads GVTSPTSDEPPMQASQSHLH. Phosphoserine occurs at positions 82, 95, and 99. Over residues 99–108 the composition is skewed to basic and acidic residues; that stretch reads SSPEDKRAGG. Ser100 bears the Phosphoserine; by DYRK2 mark. At Ser111 the chain carries Phosphoserine. The TOS motif motif lies at 113–117; it reads FEMDI.

The protein belongs to the eIF4E-binding protein family. As to quaternary structure, hypophosphorylated EIF4EBP1 competes with EIF4G1/EIF4G3 to interact with EIF4E; insulin stimulated MAP-kinase (MAPK1 and MAPK3) or mTORC1 phosphorylation of EIF4EBP1 causes dissociation of the complex allowing EIF4G1/EIF4G3 to bind and consequent initiation of translation. Interacts (via TOS motif) with RPTOR; promoting phosphorylation by mTORC1. Phosphorylated on serine and threonine residues in response to insulin, EGF and PDGF. Phosphorylation at Thr-36, Thr-45, Ser-64 and Thr-69, corresponding to the hyperphosphorylated form, is regulated by mTORC1 and abolishes binding to EIF4E. In terms of processing, ubiquitinated: when eIF4E levels are low, hypophosphorylated form is ubiquitinated by the BCR(KLHL25) complex, leading to its degradation and serving as a homeostatic mechanism to maintain translation and prevent eIF4E inhibition when eIF4E levels are low. Not ubiquitinated when hyperphosphorylated (at Thr-36, Thr-45, Ser-64 and Thr-69) or associated with eIF4E. As to expression, expressed in all tissues examined; highest levels in fat and skeletal tissue, lowest levels in kidney.

Its subcellular location is the cytoplasm. It is found in the nucleus. In terms of biological role, repressor of translation initiation that regulates EIF4E activity by preventing its assembly into the eIF4F complex: hypophosphorylated form competes with EIF4G1/EIF4G3 and strongly binds to EIF4E, leading to repress translation. In contrast, hyperphosphorylated form dissociates from EIF4E, allowing interaction between EIF4G1/EIF4G3 and EIF4E, leading to initiation of translation. Mediates the regulation of protein translation by hormones, growth factors and other stimuli that signal through the MAP kinase and mTORC1 pathways. The polypeptide is Eukaryotic translation initiation factor 4E-binding protein 1 (Eif4ebp1) (Rattus norvegicus (Rat)).